The sequence spans 308 residues: Ribosomal protein L11 methyltransferase (308 aa).

Residues T160, G181, D203, and N245 each contribute to the S-adenosyl-L-methionine site.

The protein belongs to the methyltransferase superfamily. PrmA family.

The protein resides in the cytoplasm. It catalyses the reaction L-lysyl-[protein] + 3 S-adenosyl-L-methionine = N(6),N(6),N(6)-trimethyl-L-lysyl-[protein] + 3 S-adenosyl-L-homocysteine + 3 H(+). Methylates ribosomal protein L11. The polypeptide is Ribosomal protein L11 methyltransferase (Thermoanaerobacter sp. (strain X514)).